We begin with the raw amino-acid sequence, 681 residues long: Potassium-transporting ATPase ATP-binding subunit (681 aa).

Helical transmembrane passes span 30-50 (LLVY…FFGI), 59-79 (LAIA…EAIA), 216-236 (ILLV…LPFT), and 255-275 (IALL…SIGI). The 4-aspartylphosphate intermediate role is filled by aspartate 306. Residues aspartate 343, glutamate 347, 376 to 383 (FTATTRMS), and lysine 394 each bind ATP. Mg(2+) contacts are provided by aspartate 517 and aspartate 521. 3 consecutive transmembrane segments (helical) span residues 587–607 (FAII…LNLM), 615–635 (AILS…PLSL), and 661–681 (LIAP…LGIV).

Belongs to the cation transport ATPase (P-type) (TC 3.A.3) family. Type IA subfamily. In terms of assembly, the system is composed of three essential subunits: KdpA, KdpB and KdpC.

It is found in the cell membrane. The catalysed reaction is K(+)(out) + ATP + H2O = K(+)(in) + ADP + phosphate + H(+). Part of the high-affinity ATP-driven potassium transport (or Kdp) system, which catalyzes the hydrolysis of ATP coupled with the electrogenic transport of potassium into the cytoplasm. This subunit is responsible for energy coupling to the transport system and for the release of the potassium ions to the cytoplasm. The protein is Potassium-transporting ATPase ATP-binding subunit of Listeria monocytogenes serovar 1/2a (strain ATCC BAA-679 / EGD-e).